A 257-amino-acid polypeptide reads, in one-letter code: Paired box protein 1 homolog (257 aa).

Residues 26 to 37 (TTPSSTSTTPSS) are compositionally biased toward low complexity. Positions 26-58 (TTPSSTSTTPSSDNGIQQYSSISTSSGYAPANS) are disordered. Positions 38–52 (DNGIQQYSSISTSSG) are enriched in polar residues. A DNA-binding region (paired) is located at residues 61–187 (KTAEVNQLGG…SSISRILRNK (127 aa)). Residues 64-120 (EVNQLGGVFVNGRPLPFEMRCKIVELSRQGTRPCDISRQLKISHGCVSKILTRFSEN) are PAI subdomain. The RED subdomain stretch occupies residues 139 to 187 (KVVEYIRSLKRSDPGIFAWEIRDRLISADICDRANLPSVSSISRILRNK).

It localises to the nucleus. Transcription factor. May play a role in pharyngeal cell differentiation. May have a protective role in response to infection by the Gram-negative bacterium Vibrio cholerae. The protein is Paired box protein 1 homolog of Caenorhabditis elegans.